A 140-amino-acid chain; its full sequence is Nuclear receptor 2C2-associated protein (140 aa).

It belongs to the NR2C2AP family. As to quaternary structure, interacts with NR2C2/TR4.

It localises to the nucleus. Its function is as follows. May act as a repressor of NR2C2-mediated transactivation by suppressing the binding between NR2C2/TR4 and the TR4-response element in target genes. This chain is Nuclear receptor 2C2-associated protein (Nr2c2ap), found in Mus musculus (Mouse).